Consider the following 324-residue polypeptide: tRNA dimethylallyltransferase (324 aa).

15–22 (GPTATGKS) serves as a coordination point for ATP. 17–22 (TATGKS) provides a ligand contact to substrate. The interval 40 to 43 (DSAQ) is interaction with substrate tRNA.

Belongs to the IPP transferase family. In terms of assembly, monomer. Mg(2+) serves as cofactor.

It catalyses the reaction adenosine(37) in tRNA + dimethylallyl diphosphate = N(6)-dimethylallyladenosine(37) in tRNA + diphosphate. Catalyzes the transfer of a dimethylallyl group onto the adenine at position 37 in tRNAs that read codons beginning with uridine, leading to the formation of N6-(dimethylallyl)adenosine (i(6)A). The protein is tRNA dimethylallyltransferase of Moorella thermoacetica (strain ATCC 39073 / JCM 9320).